Consider the following 733-residue polypeptide: DNA-binding protein SATB2 (733 aa).

A disordered region spans residues 1–47 (MERRSESPCLRDSPDRRSGSPDVKGPPPVKVARLEQNGSPMGARGRP). Ser-20 is modified (phosphoserine). Residues Lys-24 and Lys-30 each participate in a glycyl lysine isopeptide (Lys-Gly) (interchain with G-Cter in SUMO2) cross-link. Residue Ser-39 is modified to Phosphoserine. The 102-residue stretch at 57–158 (GLMIPVFCVV…VVTLKIQLQS (102 aa)) folds into the CMP domain. Residue Lys-161 forms a Glycyl lysine isopeptide (Lys-Gly) (interchain with G-Cter in SUMO2) linkage. One can recognise a CUTL domain in the interval 161–234 (KLEDLPAEQW…WYKKYKKIKV (74 aa)). Lys-233 participates in a covalent cross-link: Glycyl lysine isopeptide (Lys-Gly) (interchain with G-Cter in SUMO). A Glycyl lysine isopeptide (Lys-Gly) (interchain with G-Cter in SUMO); alternate cross-link involves residue Lys-350. Lys-350 is covalently cross-linked (Glycyl lysine isopeptide (Lys-Gly) (interchain with G-Cter in SUMO2); alternate). The segment at residues 350-437 (KPEPTNSSVE…ERDRIYQDER (88 aa)) is a DNA-binding region (CUT 1). Residues 435–473 (DERERSMNPNVSMVSSASSSPSSSRTPQAKTSTPTTDLP) form a disordered region. The span at 441–458 (MNPNVSMVSSASSSPSSS) shows a compositional bias: low complexity. Residue Ser-454 is modified to Phosphoserine. Polar residues predominate over residues 459-470 (RTPQAKTSTPTT). A Phosphothreonine modification is found at Thr-467. The CUT 2 DNA-binding region spans 473–560 (PIKVDGANVN…ERDVIYEEES (88 aa)). Lys-475 is covalently cross-linked (Glycyl lysine isopeptide (Lys-Gly) (interchain with G-Cter in SUMO2)). Disordered stretches follow at residues 580–617 (QVLH…KPRS) and 691–733 (DEEL…TDQR). At Ser-594 the chain carries Phosphoserine. The segment at residues 615-674 (PRSRTKISLEALGILQSFIHDVGLYPDQEAIHTLSAQLDLPKHTIIKFFQNQRYHVKHHG) is a DNA-binding region (homeobox). Residues 694 to 708 (LLTESEENDSEEGSE) show a composition bias toward acidic residues. Residues 709–733 (EMYKVEAEEENADKSKAAPAETDQR) are compositionally biased toward basic and acidic residues. Residue Lys-724 forms a Glycyl lysine isopeptide (Lys-Gly) (interchain with G-Cter in SUMO2) linkage.

Belongs to the CUT homeobox family. In terms of assembly, interacts with PIAS1. Interacts with ATF4 and RUNX2; resulting in enhanced DNA binding and transactivation by these transcription factors. In terms of processing, sumoylated by PIAS1. Sumoylation promotes nuclear localization, but represses transcription factor activity. In terms of tissue distribution, expressed in cortical neurons that extend axons across the corpus callosum. Also expressed in branchial arches and in cells of the osteoblast lineage, but not in chondrocytes and osteoclasts.

Its subcellular location is the nucleus matrix. Its function is as follows. Binds to DNA, at nuclear matrix- or scaffold-associated regions. Thought to recognize the sugar-phosphate structure of double-stranded DNA. Transcription factor controlling nuclear gene expression, by binding to matrix attachment regions (MARs) of DNA and inducing a local chromatin-loop remodeling. Acts as a docking site for several chromatin remodeling enzymes and also by recruiting corepressors (HDACs) or coactivators (HATs) directly to promoters and enhancers. Required for the initiation of the upper-layer neurons (UL1) specific genetic program and for the inactivation of deep-layer neurons (DL) and UL2 specific genes, probably by modulating Bcl11b expression. Repressor of Ctip2 and regulatory determinant of corticocortical connections in the developing cerebral cortex. May play an important role in palate formation. Acts as a molecular node in a transcriptional network regulating skeletal development and osteoblast differentiation. In Mus musculus (Mouse), this protein is DNA-binding protein SATB2 (Satb2).